We begin with the raw amino-acid sequence, 206 residues long: Ras-related protein Rab7 (206 aa).

GTP contacts are provided by residues 15–22 (GDTGVGKT), 63–67 (DTAGQ), and 125–128 (NKID). Residues cysteine 204 and cysteine 206 are each lipidated (S-geranylgeranyl cysteine). Cysteine methyl ester is present on cysteine 206.

Belongs to the small GTPase superfamily. Rab family.

The protein localises to the cell membrane. In terms of biological role, protein transport. Probably involved in vesicular traffic. The chain is Ras-related protein Rab7 from Vigna aconitifolia (Moth bean).